The primary structure comprises 493 residues: EGF-containing fibulin-like extracellular matrix protein 1 (493 aa).

The signal sequence occupies residues 1 to 17 (MLKALFLTMLTLALVKS). The region spanning 26–71 (YTQCTDGYEWDPVRQQCKDIDECDIVPDACKGGMKCVNHYGGYLCL) is the EGF-like 1; atypical domain. Positions 173 to 213 (DIDECTAGTHNCRADQVCINLRGSFACQCPPGYQKRGEQCV) constitute an EGF-like 2; calcium-binding domain. Cystine bridges form between cysteine 177–cysteine 190, cysteine 184–cysteine 199, cysteine 201–cysteine 212, cysteine 218–cysteine 228, cysteine 224–cysteine 237, cysteine 239–cysteine 252, cysteine 258–cysteine 268, cysteine 264–cysteine 277, cysteine 279–cysteine 292, cysteine 298–cysteine 309, cysteine 305–cysteine 318, cysteine 320–cysteine 332, cysteine 338–cysteine 350, cysteine 344–cysteine 359, and cysteine 365–cysteine 377. The EGF-like 3; calcium-binding domain occupies 214-253 (DIDECTIPPYCHQRCVNTPGSFYCQCSPGFQLAANNYTCV). N-linked (GlcNAc...) asparagine glycosylation occurs at asparagine 249. The 40-residue stretch at 254 to 293 (DINECDASNQCAQQCYNILGSFICQCNQGYELSSDRLNCE) folds into the EGF-like 4; calcium-binding domain. Residues 259–493 (DASNQCAQQC…LTIIVGPFSF (235 aa)) form a mediates interaction with TIMP3 region. Positions 294–333 (DIDECRTSSYLCQYQCVNEPGKFSCMCPQGYQVVRSRTCQ) constitute an EGF-like 5; calcium-binding domain. The region spanning 334 to 378 (DINECETTNECREDEMCWNYHGGFRCYPRNPCQDPYILTPENRCV) is the EGF-like 6; calcium-binding domain.

Belongs to the fibulin family. As to quaternary structure, interacts with ECM1. Interacts with TIMP3.

It is found in the secreted. The protein resides in the extracellular space. The protein localises to the extracellular matrix. Binds EGFR, the EGF receptor, inducing EGFR autophosphorylation and the activation of downstream signaling pathways. May play a role in cell adhesion and migration. May function as a negative regulator of chondrocyte differentiation. In the olfactory epithelium, it may regulate glial cell migration, differentiation and the ability of glial cells to support neuronal neurite outgrowth. The protein is EGF-containing fibulin-like extracellular matrix protein 1 (EFEMP1) of Macaca fascicularis (Crab-eating macaque).